Consider the following 98-residue polypeptide: NADH-ubiquinone oxidoreductase chain 4L (98 aa).

3 consecutive transmembrane segments (helical) span residues 1–21, 29–49, and 61–81; these read MSMV…GLLM, SLLC…LMIL, and IILL…LVMI.

This sequence belongs to the complex I subunit 4L family. As to quaternary structure, core subunit of respiratory chain NADH dehydrogenase (Complex I) which is composed of 45 different subunits.

It localises to the mitochondrion inner membrane. It catalyses the reaction a ubiquinone + NADH + 5 H(+)(in) = a ubiquinol + NAD(+) + 4 H(+)(out). Functionally, core subunit of the mitochondrial membrane respiratory chain NADH dehydrogenase (Complex I) which catalyzes electron transfer from NADH through the respiratory chain, using ubiquinone as an electron acceptor. Part of the enzyme membrane arm which is embedded in the lipid bilayer and involved in proton translocation. The polypeptide is NADH-ubiquinone oxidoreductase chain 4L (MT-ND4L) (Vicugna pacos (Alpaca)).